The following is a 322-amino-acid chain: Ig gamma-2A chain C region (322 aa).

Ig-like domains follow at residues 6–98 (PSVY…KKIV), 115–212 (VFIF…KSIS), and 221–317 (PQVY…KSLS). 3 disulfide bridges follow: C27/C82, C136/C196, and C242/C300. The N-linked (GlcNAc...) asparagine glycan is linked to N172.

In Rattus norvegicus (Rat), this protein is Ig gamma-2A chain C region (Igg-2a).